The following is a 156-amino-acid chain: MPRRREVEKRKILPDPKFQDRIVAKFVNNLMRKGKKSTGERIIYGAFDQVEAKLKDDPLKVFKKALDNVKPVVEVKSRRVGGATYQVPVEVRQDRRTALAMRWLIEYSRGRGEKTMVEKLAGEIMDAASNRGNAVKKREDTHKMAEANKAFAHYRW.

This sequence belongs to the universal ribosomal protein uS7 family. In terms of assembly, part of the 30S ribosomal subunit. Contacts proteins S9 and S11.

Functionally, one of the primary rRNA binding proteins, it binds directly to 16S rRNA where it nucleates assembly of the head domain of the 30S subunit. Is located at the subunit interface close to the decoding center, probably blocks exit of the E-site tRNA. This Anaeromyxobacter dehalogenans (strain 2CP-1 / ATCC BAA-258) protein is Small ribosomal subunit protein uS7.